The sequence spans 414 residues: WD repeat-containing protein jip5 (414 aa).

WD repeat units follow at residues 9–48 (PLSA…SSDD), 73–112 (RHKG…VENK), 118–159 (AKDG…SNVS), 222–263 (VSSV…DQDE), and 319–356 (DETE…NDMD). The segment at 39-65 (RLPSEESSDDDDGTASNSSARNGKGHI) is disordered. A disordered region spans residues 357-414 (VDMAGGKRMFGGDSDDSDDDNDSEDSEQEQRQPVEPQRKRKKNKGKGKRDIIAFADID). A compositionally biased stretch (acidic residues) spans 369-383 (DSDDSDDDNDSEDSE). The segment covering 394 to 403 (RKRKKNKGKG) has biased composition (basic residues).

It belongs to the WD repeat WDR55 family.

Its subcellular location is the nucleus. It localises to the nucleolus. The polypeptide is WD repeat-containing protein jip5 (jip5) (Aspergillus clavatus (strain ATCC 1007 / CBS 513.65 / DSM 816 / NCTC 3887 / NRRL 1 / QM 1276 / 107)).